Here is a 662-residue protein sequence, read N- to C-terminus: Bifunctional polymyxin resistance protein ArnA (662 aa).

The formyltransferase ArnAFT stretch occupies residues 1 to 307; that stretch reads MTSKAVVFAY…ELGLVEGARL (307 aa). The active-site Proton donor; for formyltransferase activity is the His-106. Residues Arg-116 and 138-142 contribute to the (6R)-10-formyltetrahydrofolate site; that span reads IERAD. The dehydrogenase ArnADH stretch occupies residues 316-662; that stretch reads RRTRVLILGV…EALREREAQA (347 aa). Residues Asp-349 and 370-371 each bind NAD(+); that span reads DI. UDP-alpha-D-glucuronate-binding positions include Ala-395, Tyr-400, and 434–435; that span reads TS. The active-site Proton acceptor; for decarboxylase activity is Glu-436. Residues Arg-462, Asn-493, 527 to 536, and Tyr-614 contribute to the UDP-alpha-D-glucuronate site; that span reads RLVDGGAQKR. The active-site Proton donor; for decarboxylase activity is Arg-620.

It in the N-terminal section; belongs to the Fmt family. UDP-L-Ara4N formyltransferase subfamily. This sequence in the C-terminal section; belongs to the NAD(P)-dependent epimerase/dehydratase family. UDP-glucuronic acid decarboxylase subfamily. Homohexamer, formed by a dimer of trimers.

It catalyses the reaction UDP-alpha-D-glucuronate + NAD(+) = UDP-beta-L-threo-pentopyranos-4-ulose + CO2 + NADH. The enzyme catalyses UDP-4-amino-4-deoxy-beta-L-arabinose + (6R)-10-formyltetrahydrofolate = UDP-4-deoxy-4-formamido-beta-L-arabinose + (6S)-5,6,7,8-tetrahydrofolate + H(+). The protein operates within nucleotide-sugar biosynthesis; UDP-4-deoxy-4-formamido-beta-L-arabinose biosynthesis; UDP-4-deoxy-4-formamido-beta-L-arabinose from UDP-alpha-D-glucuronate: step 1/3. It functions in the pathway nucleotide-sugar biosynthesis; UDP-4-deoxy-4-formamido-beta-L-arabinose biosynthesis; UDP-4-deoxy-4-formamido-beta-L-arabinose from UDP-alpha-D-glucuronate: step 3/3. It participates in bacterial outer membrane biogenesis; lipopolysaccharide biosynthesis. Its function is as follows. Bifunctional enzyme that catalyzes the oxidative decarboxylation of UDP-glucuronic acid (UDP-GlcUA) to UDP-4-keto-arabinose (UDP-Ara4O) and the addition of a formyl group to UDP-4-amino-4-deoxy-L-arabinose (UDP-L-Ara4N) to form UDP-L-4-formamido-arabinose (UDP-L-Ara4FN). The modified arabinose is attached to lipid A and is required for resistance to polymyxin and cationic antimicrobial peptides. The sequence is that of Bifunctional polymyxin resistance protein ArnA from Pseudomonas aeruginosa (strain UCBPP-PA14).